A 174-amino-acid chain; its full sequence is uncharacterized protein (174 aa).

This is an uncharacterized protein from Saccharomyces cerevisiae (strain ATCC 204508 / S288c) (Baker's yeast).